The primary structure comprises 83 residues: Mitotic-spindle organizing protein 1 (83 aa).

It belongs to the MOZART1 family. Part of the gamma-tubulin complex.

It is found in the cytoplasm. The protein resides in the cytoskeleton. It localises to the microtubule organizing center. The protein localises to the spindle pole body. Functionally, required for gamma-tubulin complex recruitment to the microtubule organizing center (MTOC). The chain is Mitotic-spindle organizing protein 1 from Botryotinia fuckeliana (strain B05.10) (Noble rot fungus).